We begin with the raw amino-acid sequence, 288 residues long: 4-diphosphocytidyl-2-C-methyl-D-erythritol kinase (288 aa).

Lys11 is an active-site residue. ATP is bound at residue Pro93–Ser103. Asp135 is a catalytic residue.

Belongs to the GHMP kinase family. IspE subfamily.

The enzyme catalyses 4-CDP-2-C-methyl-D-erythritol + ATP = 4-CDP-2-C-methyl-D-erythritol 2-phosphate + ADP + H(+). It participates in isoprenoid biosynthesis; isopentenyl diphosphate biosynthesis via DXP pathway; isopentenyl diphosphate from 1-deoxy-D-xylulose 5-phosphate: step 3/6. In terms of biological role, catalyzes the phosphorylation of the position 2 hydroxy group of 4-diphosphocytidyl-2C-methyl-D-erythritol. The chain is 4-diphosphocytidyl-2-C-methyl-D-erythritol kinase from Chlorobium limicola (strain DSM 245 / NBRC 103803 / 6330).